Reading from the N-terminus, the 2931-residue chain is Probable polyketide synthase 9/36 (2931 aa).

Positions Glu-11 to Glu-442 constitute a Ketosynthase family 3 (KS3) domain. Active-site for beta-ketoacyl synthase activity residues include Cys-181, His-323, and His-362. Residues Gly-635 to Tyr-668 are acyl/malonyl transferase. The For acyl/malonyl transferase activity role is filled by Ser-645. The N-terminal hotdog fold stretch occupies residues Ile-925–Asn-1047. One can recognise a PKS/mFAS DH domain in the interval Ile-925–Ser-1209. His-959 functions as the Proton acceptor; for dehydratase activity in the catalytic mechanism. A C-terminal hotdog fold region spans residues Asn-1064 to Ser-1209. The active-site Proton donor; for dehydratase activity is the Asp-1122. The chain crosses the membrane as a helical span at residues Leu-2293 to Thr-2313. Positions Thr-2429–Leu-2506 constitute a Carrier domain. An O-(pantetheine 4'-phosphoryl)serine modification is found at Ser-2466. A helical transmembrane segment spans residues Lys-2553–Val-2573.

Requires pantetheine 4'-phosphate as cofactor.

The protein resides in the membrane. In terms of biological role, probable polyketide synthase. In Dictyostelium discoideum (Social amoeba), this protein is Probable polyketide synthase 9/36 (pks9).